The primary structure comprises 525 residues: GMP synthase [glutamine-hydrolyzing] (525 aa).

In terms of domain architecture, Glutamine amidotransferase type-1 spans 8–207 (KILILDFGSQ…ALDICGCDAN (200 aa)). The Nucleophile role is filled by Cys-85. Active-site residues include His-181 and Glu-183. The GMPS ATP-PPase domain maps to 208-400 (WKPSSIIEDA…LGLPYDMLYR (193 aa)). 235–241 (SGGVDSS) is a binding site for ATP.

Homodimer.

It catalyses the reaction XMP + L-glutamine + ATP + H2O = GMP + L-glutamate + AMP + diphosphate + 2 H(+). The protein operates within purine metabolism; GMP biosynthesis; GMP from XMP (L-Gln route): step 1/1. Functionally, catalyzes the synthesis of GMP from XMP. This is GMP synthase [glutamine-hydrolyzing] from Shewanella piezotolerans (strain WP3 / JCM 13877).